The primary structure comprises 251 residues: Flap endonuclease Xni (251 aa).

Aspartate 104 is a Mg(2+) binding site. A 5'-3' exonuclease domain is found at 160 to 248 (VSPQQLSDYW…ALTGNLQQLR (89 aa)). Leucine 171, alanine 172, proline 180, valine 182, and isoleucine 185 together coordinate K(+). Residues 184–189 (GIGPKT) form an interaction with DNA region.

This sequence belongs to the Xni family. It depends on Mg(2+) as a cofactor. Requires K(+) as cofactor.

In terms of biological role, has flap endonuclease activity. During DNA replication, flap endonucleases cleave the 5'-overhanging flap structure that is generated by displacement synthesis when DNA polymerase encounters the 5'-end of a downstream Okazaki fragment. In Serratia proteamaculans (strain 568), this protein is Flap endonuclease Xni.